The sequence spans 201 residues: Probable nicotinate-nucleotide adenylyltransferase (201 aa).

Belongs to the NadD family.

The catalysed reaction is nicotinate beta-D-ribonucleotide + ATP + H(+) = deamido-NAD(+) + diphosphate. Its pathway is cofactor biosynthesis; NAD(+) biosynthesis; deamido-NAD(+) from nicotinate D-ribonucleotide: step 1/1. In terms of biological role, catalyzes the reversible adenylation of nicotinate mononucleotide (NaMN) to nicotinic acid adenine dinucleotide (NaAD). This is Probable nicotinate-nucleotide adenylyltransferase from Clostridium botulinum (strain Loch Maree / Type A3).